Reading from the N-terminus, the 226-residue chain is Leucyl/phenylalanyl-tRNA--protein transferase (226 aa).

It belongs to the L/F-transferase family.

The protein localises to the cytoplasm. The catalysed reaction is N-terminal L-lysyl-[protein] + L-leucyl-tRNA(Leu) = N-terminal L-leucyl-L-lysyl-[protein] + tRNA(Leu) + H(+). It catalyses the reaction N-terminal L-arginyl-[protein] + L-leucyl-tRNA(Leu) = N-terminal L-leucyl-L-arginyl-[protein] + tRNA(Leu) + H(+). The enzyme catalyses L-phenylalanyl-tRNA(Phe) + an N-terminal L-alpha-aminoacyl-[protein] = an N-terminal L-phenylalanyl-L-alpha-aminoacyl-[protein] + tRNA(Phe). Functions in the N-end rule pathway of protein degradation where it conjugates Leu, Phe and, less efficiently, Met from aminoacyl-tRNAs to the N-termini of proteins containing an N-terminal arginine or lysine. The polypeptide is Leucyl/phenylalanyl-tRNA--protein transferase (Pseudomonas aeruginosa (strain LESB58)).